The sequence spans 583 residues: CD166 antigen (583 aa).

Positions 1-27 (MASKVSPSCRLVFCLLISAAVLRPGLG) are cleaved as a signal peptide. Ig-like V-type domains follow at residues 28–120 (WYTV…TEDN) and 125–234 (PTLV…KTIY). Topologically, residues 28–527 (WYTVNSAYGD…NREKVNDQAK (500 aa)) are extracellular. 2 cysteine pairs are disulfide-bonded: Cys43–Cys113 and Cys157–Cys220. N-linked (GlcNAc...) asparagine glycans are attached at residues Asn95, Asn167, Asn265, Asn306, Asn361, Asn457, Asn480, and Asn499. Ig-like C2-type domains are found at residues 245–328 (PTEQ…TTIT), 333–409 (DLSL…ESLT), and 416–501 (PQIK…LNVS). 3 cysteine pairs are disulfide-bonded: Cys270–Cys313, Cys354–Cys392, and Cys435–Cys485. Residues 528-549 (LIVGIVVGLLLAALVAGVVYWL) form a helical membrane-spanning segment. Topologically, residues 550 to 583 (YMKKSKTASKHVNKDLGNMEENKKLEENNHKTEA) are cytoplasmic. The interval 562–583 (NKDLGNMEENKKLEENNHKTEA) is disordered. A compositionally biased stretch (basic and acidic residues) spans 569–583 (EENKKLEENNHKTEA).

As to quaternary structure, homodimer. Interacts (via extracellular domain) with CD6 (via extracellular domain). Homodimerization and interaction with CD6 involve the same region and cannot occur simultaneously. The affinity for CD6 is much higher than the affinity for self-association. Interacts (via glycosylated extracellular domain) with LGALS1 and LGALS3. Interaction with LGALS1 or LGALS3 inhibits interaction with CD6. Post-translationally, glycosylated. In terms of tissue distribution, detected on brain motor neurons, in differentiating retinal ganglion cells and in adult retina. Detected on leukocytes and on lymphatic endothelial cells. Detected in spleen B cells and T-cells (at protein level). Detected in adult brain and embryonic spinal cord. Expressed at high levels in the brain, and lung, and at lower levels in the liver, and the kidney, as well as by activated leukocytes.

The protein localises to the cell membrane. The protein resides in the cell projection. Its subcellular location is the axon. It localises to the dendrite. Cell adhesion molecule that mediates both heterotypic cell-cell contacts via its interaction with CD6, as well as homotypic cell-cell contacts. Promotes T-cell activation and proliferation via its interactions with CD6. Contributes to the formation and maturation of the immunological synapse via its interactions with CD6. Mediates homotypic interactions with cells that express ALCAM. Mediates attachment of dendritic cells onto endothelial cells via homotypic interaction. Inhibits endothelial cell migration and promotes endothelial tube formation via homotypic interactions. Required for normal organization of the lymph vessel network. Required for normal hematopoietic stem cell engraftment in the bone marrow. Plays a role in hematopoiesis; required for normal numbers of hematopoietic stem cells in bone marrow. Promotes in vitro osteoblast proliferation and differentiation. Promotes neurite extension, axon growth and axon guidance; axons grow preferentially on surfaces that contain ALCAM. Mediates outgrowth and pathfinding for retinal ganglion cell axons. This is CD166 antigen (Alcam) from Mus musculus (Mouse).